The chain runs to 375 residues: Aminomethyltransferase (375 aa).

Belongs to the GcvT family. As to quaternary structure, the glycine cleavage system is composed of four proteins: P, T, L and H.

It carries out the reaction N(6)-[(R)-S(8)-aminomethyldihydrolipoyl]-L-lysyl-[protein] + (6S)-5,6,7,8-tetrahydrofolate = N(6)-[(R)-dihydrolipoyl]-L-lysyl-[protein] + (6R)-5,10-methylene-5,6,7,8-tetrahydrofolate + NH4(+). In terms of biological role, the glycine cleavage system catalyzes the degradation of glycine. The chain is Aminomethyltransferase from Ralstonia nicotianae (strain ATCC BAA-1114 / GMI1000) (Ralstonia solanacearum).